The chain runs to 308 residues: Nodulation protein D 1 (308 aa).

The 58-residue stretch at 6-63 folds into the HTH lysR-type domain; the sequence is LDLNLLVALDALMTERKLTAAARRINLSQPAMSAAIARLRTYFGDELFSMQGRELIPT. The segment at residues 23 to 42 is a DNA-binding region (H-T-H motif); it reads LTAAARRINLSQPAMSAAIA.

This sequence belongs to the LysR transcriptional regulatory family.

Functionally, nodD regulates the expression of the nodABCFE genes which encode other nodulation proteins. NodD is also a negative regulator of its own expression. Binds flavonoids as inducers. This chain is Nodulation protein D 1 (nodD1), found in Rhizobium meliloti (strain 1021) (Ensifer meliloti).